Here is a 176-residue protein sequence, read N- to C-terminus: 2-C-methyl-D-erythritol 2,4-cyclodiphosphate synthase (176 aa).

A divalent metal cation is bound by residues aspartate 23, histidine 25, and histidine 60. Aspartate 23 to histidine 25 contacts 4-CDP-2-C-methyl-D-erythritol 2-phosphate. Threonine 149–glutamate 152 serves as a coordination point for 4-CDP-2-C-methyl-D-erythritol 2-phosphate.

The protein belongs to the IspF family. In terms of assembly, homotrimer. It depends on a divalent metal cation as a cofactor.

It carries out the reaction 4-CDP-2-C-methyl-D-erythritol 2-phosphate = 2-C-methyl-D-erythritol 2,4-cyclic diphosphate + CMP. The protein operates within isoprenoid biosynthesis; isopentenyl diphosphate biosynthesis via DXP pathway; isopentenyl diphosphate from 1-deoxy-D-xylulose 5-phosphate: step 4/6. Involved in the biosynthesis of isopentenyl diphosphate (IPP) and dimethylallyl diphosphate (DMAPP), two major building blocks of isoprenoid compounds. Catalyzes the conversion of 4-diphosphocytidyl-2-C-methyl-D-erythritol 2-phosphate (CDP-ME2P) to 2-C-methyl-D-erythritol 2,4-cyclodiphosphate (ME-CPP) with a corresponding release of cytidine 5-monophosphate (CMP). The polypeptide is 2-C-methyl-D-erythritol 2,4-cyclodiphosphate synthase (Chlamydia caviae (strain ATCC VR-813 / DSM 19441 / 03DC25 / GPIC) (Chlamydophila caviae)).